Here is a 199-residue protein sequence, read N- to C-terminus: Thymidylate kinase (199 aa).

An ATP-binding site is contributed by 7–14; it reads GTEGVGKT.

The protein belongs to the thymidylate kinase family.

The catalysed reaction is dTMP + ATP = dTDP + ADP. Phosphorylation of dTMP to form dTDP in both de novo and salvage pathways of dTTP synthesis. In Acinetobacter baumannii (strain ATCC 17978 / DSM 105126 / CIP 53.77 / LMG 1025 / NCDC KC755 / 5377), this protein is Thymidylate kinase.